Consider the following 167-residue polypeptide: Leptin (167 aa).

A signal peptide spans 1–21 (MHWGTLCGFLWLWPYLFYVQA). C117 and C167 form a disulfide bridge.

Belongs to the leptin family. In terms of assembly, interacts with SIGLEC6. In terms of tissue distribution, adipose tissue is the main source of leptin. It is also produced by other peripheral tissues such as the skeletal muscle. Expressed by intercalated and striated tracts of submandibular and parotid salivary gland intralobular ducts. Detected by fundic epithelium of the gastric mucosa. Secreted into blood and gastric juice.

Its subcellular location is the secreted. Functionally, key player in the regulation of energy balance and body weight control. Once released into the circulation, has central and peripheral effects by binding LEPR, found in many tissues, which results in the activation of several major signaling pathways. In the hypothalamus, acts as an appetite-regulating factor that induces a decrease in food intake and an increase in energy consumption by inducing anorexinogenic factors and suppressing orexigenic neuropeptides, also regulates bone mass and secretion of hypothalamo-pituitary-adrenal hormones. In the periphery, increases basal metabolism, influences reproductive function, regulates pancreatic beta-cell function and insulin secretion, is pro-angiogenic for endothelial cell and affects innate and adaptive immunity. In the arcuate nucleus of the hypothalamus, activates by depolarization POMC neurons inducing FOS and SOCS3 expression to release anorexigenic peptides and inhibits by hyperpolarization NPY neurons inducing SOCS3 with a consequent reduction on release of orexigenic peptides. In addition to its known satiety inducing effect, has a modulatory role in nutrient absorption. In the intestine, reduces glucose absorption by enterocytes by activating PKC and leading to a sequential activation of p38, PI3K and ERK signaling pathways which exerts an inhibitory effect on glucose absorption. Acts as a growth factor on certain tissues, through the activation of different signaling pathways increases expression of genes involved in cell cycle regulation such as CCND1, via JAK2-STAT3 pathway, or VEGFA, via MAPK1/3 and PI3K-AKT1 pathways. May also play an apoptotic role via JAK2-STAT3 pathway and up-regulation of BIRC5 expression. Pro-angiogenic, has mitogenic activity on vascular endothelial cells and plays a role in matrix remodeling by regulating the expression of matrix metalloproteinases (MMPs) and tissue inhibitors of metalloproteinases (TIMPs). In innate immunity, modulates the activity and function of neutrophils by increasing chemotaxis and the secretion of oxygen radicals. Increases phagocytosis by macrophages and enhances secretion of pro-inflammatory mediators. Increases cytotoxic ability of NK cells. Plays a pro-inflammatory role, in synergy with IL1B, by inducing NOS2 which promotes the production of IL6, IL8 and Prostaglandin E2, through a signaling pathway that involves JAK2, PI3K, MAP2K1/MEK1 and MAPK14/p38. In adaptive immunity, promotes the switch of memory T-cells towards T helper-1 cell immune responses. Increases CD4(+)CD25(-) T-cell proliferation and reduces autophagy during TCR (T-cell receptor) stimulation, through MTOR signaling pathway activation and BCL2 up-regulation. This chain is Leptin, found in Homo sapiens (Human).